The following is a 634-amino-acid chain: 1-deoxy-D-xylulose-5-phosphate synthase (634 aa).

Residues histidine 74 and 115-117 (AHS) contribute to the thiamine diphosphate site. Aspartate 146 contributes to the Mg(2+) binding site. Residues 147–148 (GA), asparagine 176, tyrosine 283, and glutamate 365 contribute to the thiamine diphosphate site. Asparagine 176 lines the Mg(2+) pocket.

This sequence belongs to the transketolase family. DXPS subfamily. As to quaternary structure, homodimer. It depends on Mg(2+) as a cofactor. Thiamine diphosphate serves as cofactor.

It catalyses the reaction D-glyceraldehyde 3-phosphate + pyruvate + H(+) = 1-deoxy-D-xylulose 5-phosphate + CO2. The protein operates within metabolic intermediate biosynthesis; 1-deoxy-D-xylulose 5-phosphate biosynthesis; 1-deoxy-D-xylulose 5-phosphate from D-glyceraldehyde 3-phosphate and pyruvate: step 1/1. In terms of biological role, catalyzes the acyloin condensation reaction between C atoms 2 and 3 of pyruvate and glyceraldehyde 3-phosphate to yield 1-deoxy-D-xylulose-5-phosphate (DXP). The sequence is that of 1-deoxy-D-xylulose-5-phosphate synthase from Burkholderia lata (strain ATCC 17760 / DSM 23089 / LMG 22485 / NCIMB 9086 / R18194 / 383).